We begin with the raw amino-acid sequence, 639 residues long: Uridine permease (639 aa).

Residues 1–37 (MPVSDSGFDNSSKTMKDDTIPTEDYEEITKESEMGDA) are disordered. Residues 1 to 162 (MPVSDSGFDN…LQLGLNWWQT (162 aa)) are Cytoplasmic-facing. T54 carries the phosphothreonine modification. The residue at position 56 (S56) is a Phosphoserine. Residues 163 to 180 (WICIWVGYTFVAFFLILG) traverse the membrane as a helical segment. The Extracellular portion of the chain corresponds to 181–200 (SKVGNNYHISFPISSRVSFG). A helical membrane pass occupies residues 201–225 (IYFSIWIVINRVVMACVWNSTLAYI). Topologically, residues 226-259 (GSQCVQLMLKAIFGTNLNTRIKDTIKNPNLTNFE) are cytoplasmic. The helical transmembrane segment at 260 to 276 (FMCFMVFWVACLPFLWF) threads the bilayer. Over 277 to 283 (PPDKLRH) the chain is Extracellular. A helical membrane pass occupies residues 284–305 (IFALKSAITPFAAFGFLIWTLC). Residues 306–367 (KAKGHLALGS…KTYKSSVYSQ (62 aa)) lie on the Cytoplasmic side of the membrane. The helical transmembrane segment at 368 to 392 (LIALPVCYAIISLIGILSVSAAYTL) threads the bilayer. Residues 393–416 (YGVNYWSPLDILNRYLDNYTSGNR) lie on the Extracellular side of the membrane. The chain crosses the membrane as a helical span at residues 417 to 435 (AGVFLISFIFAFDQLGANL). Topologically, residues 436–460 (SGNSIPAGTDLTALLPKFINIRRGS) are cytoplasmic. A helical transmembrane segment spans residues 461–477 (YICALISLAICPWDLLS). At 478–483 (SSSKFT) the chain is on the extracellular side. A helical membrane pass occupies residues 484–507 (TALAAYAVFLSAIAGVISADYFIV). The Cytoplasmic portion of the chain corresponds to 508 to 537 (RKGYVNIFHCYTDKPGSYYMYNKYGTNWRA). A helical membrane pass occupies residues 538–562 (VVAYIFGIAPNFAGFLGSVGVSVPI). The Extracellular portion of the chain corresponds to 563–572 (GAMKVYYLNY). The chain crosses the membrane as a helical span at residues 573–590 (FVGYLLAALSYCILVYFY). Residues 591 to 639 (PIKGIPGDAKITDRKWLEEWVEVEEFGTEREAFEEYGGVSTGYEKIRYI) are Cytoplasmic-facing. K635 participates in a covalent cross-link: Glycyl lysine isopeptide (Lys-Gly) (interchain with G-Cter in ubiquitin).

The protein belongs to the purine-cytosine permease (2.A.39) family.

The protein localises to the membrane. In terms of biological role, high-affinity transport of uridine. The protein is Uridine permease (FUI1) of Saccharomyces cerevisiae (strain ATCC 204508 / S288c) (Baker's yeast).